The sequence spans 418 residues: Glutamyl-tRNA(Gln) amidotransferase subunit D (418 aa).

Residues 74–405 (KNISILSTGG…EDAKELMSKD (332 aa)) enclose the Asparaginase/glutaminase domain. Active-site residues include T84, T160, D161, and K237.

Belongs to the asparaginase 1 family. GatD subfamily. As to quaternary structure, heterodimer of GatD and GatE.

The enzyme catalyses L-glutamyl-tRNA(Gln) + L-glutamine + ATP + H2O = L-glutaminyl-tRNA(Gln) + L-glutamate + ADP + phosphate + H(+). Functionally, allows the formation of correctly charged Gln-tRNA(Gln) through the transamidation of misacylated Glu-tRNA(Gln) in organisms which lack glutaminyl-tRNA synthetase. The reaction takes place in the presence of glutamine and ATP through an activated gamma-phospho-Glu-tRNA(Gln). The GatDE system is specific for glutamate and does not act on aspartate. This is Glutamyl-tRNA(Gln) amidotransferase subunit D from Methanococcus maripaludis (strain C7 / ATCC BAA-1331).